The sequence spans 26 residues: Hainantoxin F1-31.97 (26 aa).

2 cysteine pairs are disulfide-bonded: cysteine 2-cysteine 16 and cysteine 9-cysteine 21.

This sequence belongs to the neurotoxin 10 (Hwtx-1) family. 17 (Hntx-9) subfamily. In terms of tissue distribution, expressed by the venom gland.

The protein resides in the secreted. In terms of biological role, ion channel inhibitor. The chain is Hainantoxin F1-31.97 from Cyriopagopus hainanus (Chinese bird spider).